The primary structure comprises 347 residues: Palmitoyltransferase ZDHHC11 (347 aa).

At 1–46 (MKEMNICGINKNWVLPEAQENNVKKFLPRPLSRVNGWSPPLHSFQA) the chain is on the cytoplasmic side. The helical transmembrane segment at 47 to 67 (ISWITYLAMSIVTFGIFIPFL) threads the bilayer. Over 68–75 (PYSWKYAA) the chain is Lumenal. Residues 76-96 (NIVMGGVFIFHLIVHLIAITI) traverse the membrane as a helical segment. Residues 97–170 (DPADTNVRLK…LNNCVGRRNY (74 aa)) lie on the Cytoplasmic side of the membrane. One can recognise a DHHC domain in the interval 128–178 (QYCHLCEVTASKKAKHCSACNKCVSGFDHHCKWLNNCVGRRNYWFFFWSVA). The active-site S-palmitoyl cysteine intermediate is the Cys158. The chain crosses the membrane as a helical span at residues 171-191 (WFFFWSVASAAVGILGVMIIL). Residues 192–234 (CYICIQYFVNPDELRTDPLYKEIISENTWLLFLSLWPVPVKTP) are Lumenal-facing. The helical transmembrane segment at 235-255 (IVLSIAVMALLLAIASFVMLG) threads the bilayer. The Cytoplasmic segment spans residues 256–347 (HLLIFHLYLI…SPPKICHSED (92 aa)). The span at 291–306 (ELPLQKKGDLPQEKSD) shows a compositional bias: basic and acidic residues. Residues 291–332 (ELPLQKKGDLPQEKSDNWAWPKSPPRVGSQKFPVSTLSPKSS) form a disordered region. Polar residues predominate over residues 322–331 (FPVSTLSPKS).

Belongs to the DHHC palmitoyltransferase family. In terms of assembly, interacts with IRF3 and STING1; in presence of DNA viruses recruits IRF3 to STING1 promoting IRF3 phosphorylation and activation.

The protein resides in the endosome membrane. It carries out the reaction L-cysteinyl-[protein] + hexadecanoyl-CoA = S-hexadecanoyl-L-cysteinyl-[protein] + CoA. In terms of biological role, endoplasmic reticulum-localized palmitoyltransferase that could catalyze the addition of palmitate onto various protein substrates and be involved in a variety of cellular processes. Has a palmitoyltransferase activity toward NCDN and regulates NCDN association with endosome membranes through this palmitoylation. May play a role in cell proliferation. Also has a palmitoyltransferase activity-independent function in DNA virus-triggered and CGAS-mediated innate immune response. Functions as an adapter that recruits IRF3 to STING1 to promote the activation of that key transcriptional regulator of type I interferon (IFN)-dependent immune response. This Mus musculus (Mouse) protein is Palmitoyltransferase ZDHHC11.